The sequence spans 98 residues: Putative pterin-4-alpha-carbinolamine dehydratase (98 aa).

This sequence belongs to the pterin-4-alpha-carbinolamine dehydratase family.

The enzyme catalyses (4aS,6R)-4a-hydroxy-L-erythro-5,6,7,8-tetrahydrobiopterin = (6R)-L-erythro-6,7-dihydrobiopterin + H2O. The polypeptide is Putative pterin-4-alpha-carbinolamine dehydratase (Parasynechococcus marenigrum (strain WH8102)).